A 342-amino-acid polypeptide reads, in one-letter code: Olfactory receptor 51F2 (342 aa).

At 1–39 the chain is on the extracellular side; it reads MTETSLSSQCFPMSVLNNTIAEPLIFLLMGIPGLKATQY. A glycan (N-linked (GlcNAc...) asparagine) is linked at Asn-17. Residues 40 to 60 traverse the membrane as a helical segment; that stretch reads WISIPFCLLYVVAVSGNSMIL. Residues 61 to 68 are Cytoplasmic-facing; it reads FVVLCERS. The helical transmembrane segment at 69–89 threads the bilayer; the sequence is LHKPMYYFLSMLSATDLSLSL. Over 90-113 the chain is Extracellular; sequence CTLSTTLGVFWFEAREINLNACIA. An intrachain disulfide couples Cys-111 to Cys-203. The helical transmembrane segment at 114–134 threads the bilayer; sequence QMFFLHGFTFMESGVLLAMAF. Topologically, residues 135 to 153 are cytoplasmic; sequence DRFVAICYPLRYTTILTNA. A helical transmembrane segment spans residues 154-174; sequence RIAKIGMSMLIRNVAVMLPVM. The Extracellular segment spans residues 175 to 210; that stretch reads LFVKRLSFCSSMVLSHSYCYHVDLIQLSCTDNRINS. A helical transmembrane segment spans residues 211–231; sequence ILGLFALLSTTGFDCPCILLS. The Cytoplasmic segment spans residues 232 to 251; sequence YILIIRSVLSIASSEERRKA. Residues 252–272 traverse the membrane as a helical segment; it reads FNTCTSHISAVSIFYLPLISL. At 273–287 the chain is on the extracellular side; the sequence is SLVHRYGHSAPPFVH. A helical membrane pass occupies residues 288–308; that stretch reads IIMANVFLLIPPVLNPIIYSV. Over 309-342 the chain is Cytoplasmic; it reads KIKQIQKAIIKVLIQKHSKSNHQLFLIRDKAIYE.

The protein belongs to the G-protein coupled receptor 1 family.

The protein localises to the cell membrane. Functionally, odorant receptor. In Homo sapiens (Human), this protein is Olfactory receptor 51F2 (OR51F2).